Here is a 464-residue protein sequence, read N- to C-terminus: Protein FAM90A5 (464 aa).

3 disordered regions span residues 16-42 (RAQT…DPRL), 70-389 (PATL…HDGA), and 415-437 (HSPE…SEAP). Composition is skewed to basic and acidic residues over residues 74–89 (GKKE…KPRV) and 97–114 (NKDK…DPQR). The span at 180-197 (LASLSPLRKASLSSSSSL) shows a compositional bias: low complexity.

Belongs to the FAM90 family.

This chain is Protein FAM90A5, found in Homo sapiens (Human).